A 619-amino-acid polypeptide reads, in one-letter code: E3 ubiquitin-protein ligase DTX4 (619 aa).

WWE domains are found at residues 1–78 and 79–155; these read MLLA…PVRR and NYYD…RVRR. Disordered stretches follow at residues 238–281 and 358–389; these read KPLD…PGPN and PPPV…KGKT. A compositionally biased stretch (polar residues) spans 261-273; the sequence is QASSMPTGTTMGS. Residues 378–387 are compositionally biased toward basic residues; the sequence is KTTKKQAKKG. The RING-type; atypical zinc finger occupies 409–468; that stretch reads CTICMERLTAPSGYKGPQPTVKPDLVGKLSRCGHVYHIYCLVAMYNNGNKDGSLQCPTCK.

This sequence belongs to the Deltex family. In terms of assembly, interacts with NLRP4.

The protein localises to the cytoplasm. The catalysed reaction is S-ubiquitinyl-[E2 ubiquitin-conjugating enzyme]-L-cysteine + [acceptor protein]-L-lysine = [E2 ubiquitin-conjugating enzyme]-L-cysteine + N(6)-ubiquitinyl-[acceptor protein]-L-lysine.. Its pathway is protein modification; protein ubiquitination. Regulator of Notch signaling, a signaling pathway involved in cell-cell communications that regulates a broad spectrum of cell-fate determinations. Functions as a ubiquitin ligase protein in vivo, mediating 'Lys48'-linked polyubiquitination and promoting degradation of TBK1, targeting to TBK1 requires interaction with NLRP4. In Homo sapiens (Human), this protein is E3 ubiquitin-protein ligase DTX4 (DTX4).